The following is a 345-amino-acid chain: Probable fructokinase-3 (345 aa).

Belongs to the carbohydrate kinase PfkB family.

It carries out the reaction D-fructose + ATP = D-fructose 6-phosphate + ADP + H(+). It functions in the pathway glycan biosynthesis; starch biosynthesis. May play an important role in maintaining the flux of carbon towards starch formation. The polypeptide is Probable fructokinase-3 (Arabidopsis thaliana (Mouse-ear cress)).